A 422-amino-acid polypeptide reads, in one-letter code: MYRVPEFYARRKRLGGQTPYLMDQLGLRLGMWYWKDETRTLEFRRFAAEDSVQWLLKHHPHFTPAAEVKEKGKKGKAVHFAETDGPASDRLTDKRLAAKDDKSAKAVEKRGQQGTITLDDVKFVTLLLLQDTEMQRICSFTTFMRNKNLDNFLMALLYYLSHYLEKNSLEKKPKSYMVGLVEKKEMELVLSELEAAQRYLAQKYCILVLGLAVPDKHHMCCGKEKISDTQKDWKFFESFYTFCTYVAWIVFRRQHLTEIEEEVGRLFRTNMFNIPRRRREDEESGGEKKRMTFVQFRRMMAKRPAIKKAINMRSPVMSTLLPSLREKAQNVFEKKYHQVDVRFPAEMQKHVGTLDSVPMPVVGILGEPRCLFNPHTLHPLDPEENTKSFGRYPSLMENNNMRIQDTLDLVMKTLSSHTSCPK.

As to quaternary structure, interacts with PPP1CA.

Its function is as follows. Inhibits phosphatase activity of protein phosphatase 1 (PP1) complexes. In Homo sapiens (Human), this protein is Protein phosphatase 1 regulatory subunit 36 (PPP1R36).